The sequence spans 434 residues: Cytochrome b-c1 complex subunit 2, mitochondrial (434 aa).

The N-terminal 31 residues, 1–31, are a transit peptide targeting the mitochondrion; the sequence is MYSLNRLPRSAAFKSSANLLRRNASTTSAGG.

The protein belongs to the peptidase M16 family. UQCRC2/QCR2 subfamily. As to quaternary structure, component of the ubiquinol-cytochrome c oxidoreductase (cytochrome b-c1 complex, complex III, CIII), a multisubunit enzyme composed of 10 subunits. The complex is composed of 3 respiratory subunits cytochrome b (COB), cytochrome c1 (CYT1) and Rieske protein (RIP1), 2 core protein subunits COR1 and QCR2, and 5 low-molecular weight protein subunits QCR6, QCR7, QCR8, QCR9 and QCR10. The complex exists as an obligatory dimer and forms supercomplexes (SCs) in the inner mitochondrial membrane with a monomer or a dimer of cytochrome c oxidase (complex IV, CIV), resulting in 2 different assemblies (supercomplexes III(2)IV and III(2)IV(2)). Interacts with MRJ1.

It is found in the mitochondrion inner membrane. Functionally, component of the ubiquinol-cytochrome c oxidoreductase, a multisubunit transmembrane complex that is part of the mitochondrial electron transport chain which drives oxidative phosphorylation. The respiratory chain contains 3 multisubunit complexes succinate dehydrogenase (complex II, CII), ubiquinol-cytochrome c oxidoreductase (cytochrome b-c1 complex, complex III, CIII) and cytochrome c oxidase (complex IV, CIV), that cooperate to transfer electrons derived from NADH and succinate to molecular oxygen, creating an electrochemical gradient over the inner membrane that drives transmembrane transport and the ATP synthase. The cytochrome b-c1 complex catalyzes electron transfer from ubiquinol to cytochrome c, linking this redox reaction to translocation of protons across the mitochondrial inner membrane, with protons being carried across the membrane as hydrogens on the quinol. In the process called Q cycle, 2 protons are consumed from the matrix, 4 protons are released into the intermembrane space and 2 electrons are passed to cytochrome c. The chain is Cytochrome b-c1 complex subunit 2, mitochondrial from Cryptococcus neoformans var. grubii serotype A (strain H99 / ATCC 208821 / CBS 10515 / FGSC 9487) (Filobasidiella neoformans var. grubii).